A 102-amino-acid chain; its full sequence is Large ribosomal subunit protein uL24 (102 aa).

Belongs to the universal ribosomal protein uL24 family. As to quaternary structure, part of the 50S ribosomal subunit.

In terms of biological role, one of two assembly initiator proteins, it binds directly to the 5'-end of the 23S rRNA, where it nucleates assembly of the 50S subunit. Its function is as follows. One of the proteins that surrounds the polypeptide exit tunnel on the outside of the subunit. The chain is Large ribosomal subunit protein uL24 from Cupriavidus metallidurans (strain ATCC 43123 / DSM 2839 / NBRC 102507 / CH34) (Ralstonia metallidurans).